Here is a 528-residue protein sequence, read N- to C-terminus: Pentatricopeptide repeat-containing protein At1g62914, mitochondrial (528 aa).

The transit peptide at 1–20 directs the protein to the mitochondrion; that stretch reads MLAKISSSAKRFVHRSLVVR. 13 PPR repeats span residues 77–111, 112–146, 147–181, 182–216, 217–251, 252–286, 287–321, 322–356, 357–391, 392–426, 427–461, 462–496, and 497–528; these read SIIE…GISH, NLYT…GYEP, DIVT…GYKP, DTVT…GCQP, DLVT…KIEA, NVVI…GVRP, NVIT…KINP, NLVT…SIDP, NIFT…DCLP, NVVT…GLVG, NTVT…GVHP, NILT…TMEP, and DIYT…ALKE.

Belongs to the PPR family. P subfamily.

The protein resides in the mitochondrion. This Arabidopsis thaliana (Mouse-ear cress) protein is Pentatricopeptide repeat-containing protein At1g62914, mitochondrial.